We begin with the raw amino-acid sequence, 258 residues long: Cytochrome P450 1A2 (258 aa).

It belongs to the cytochrome P450 family. The cofactor is heme.

It localises to the endoplasmic reticulum membrane. Its subcellular location is the microsome membrane. The catalysed reaction is an organic molecule + reduced [NADPH--hemoprotein reductase] + O2 = an alcohol + oxidized [NADPH--hemoprotein reductase] + H2O + H(+). Its function is as follows. Cytochromes P450 are a group of heme-thiolate monooxygenases. In liver microsomes, this enzyme is involved in an NADPH-dependent electron transport pathway. It oxidizes a variety of structurally unrelated compounds, including steroids, fatty acids, and xenobiotics. In Gallus gallus (Chicken), this protein is Cytochrome P450 1A2 (CYP1A2).